Reading from the N-terminus, the 697-residue chain is Choline transporter-like protein 2 (697 aa).

The Cytoplasmic portion of the chain corresponds to 1–30 (MDMEEKPKYGEPRKFDPSFKGPIQNRGCTD). Residues 31–51 (IVCCIIFIIAILGYLAVGILA) traverse the membrane as a helical segment. The Extracellular portion of the chain corresponds to 52-226 (WTHGDPRKVI…KIFEDYTKSW (175 aa)). N-linked (GlcNAc...) asparagine glycans are attached at residues asparagine 113 and asparagine 204. Residues 227 to 247 (YWILICLLIAVVLSLIFIVLL) form a helical membrane-spanning segment. At 248–249 (RF) the chain is on the cytoplasmic side. The chain crosses the membrane as a helical span at residues 250–270 (LAGVMVWVMILMVVAVIAYGI). Over 271–309 (AHCSIKYVSLKDTPGSNITLQQLGFQPDFAVYLHIRQTW) the chain is Extracellular. Residue asparagine 287 is glycosylated (N-linked (GlcNAc...) asparagine). A helical membrane pass occupies residues 310 to 330 (LAFIIILAILELIIILLLIFL). The Cytoplasmic portion of the chain corresponds to 331–353 (RNRIRVAVELMKEASRAIGYVMS). Residues 354–374 (SLVFPIFTFFLLAIVIAFWGV) form a helical membrane-spanning segment. Topologically, residues 375–435 (NAVFLSTSSE…YGGETPYHKY (61 aa)) are extracellular. 2 N-linked (GlcNAc...) asparagine glycosylation sites follow: asparagine 391 and asparagine 406. A helical transmembrane segment spans residues 436–456 (LILLQFYNVFLFFWCANFVTA). Residues 457–498 (LGQMTLAGAFASYYWAFDKSKDMPAFPLCASLGRSLRYHTGS) lie on the Cytoplasmic side of the membrane. A helical transmembrane segment spans residues 499–519 (LAFGSLLLAIVQVIRVLLEYI). Residues 520–593 (DHKLKGAENK…RVVVLDKVTD (74 aa)) lie on the Extracellular side of the membrane. A helical transmembrane segment spans residues 594-614 (FILFLGKLLIVGLVGIFAFFF). The Cytoplasmic portion of the chain corresponds to 615–632 (FSGQTDAFKGTAPSLHYY). Residues 633 to 653 (WVPILTVLVCSYLIAHGFFSV) form a helical membrane-spanning segment. At 654 to 697 (YAMCVDTLFLCFLEDLERNDGSAERPYLMSENLLNVLKKKNQAN) the chain is on the extracellular side.

This sequence belongs to the CTL (choline transporter-like) family.

The protein localises to the cell membrane. It is found in the mitochondrion outer membrane. The catalysed reaction is choline(out) + n H(+)(in) = choline(in) + n H(+)(out). It carries out the reaction ethanolamine(out) + n H(+)(in) = ethanolamine(in) + n H(+)(out). Its function is as follows. Choline/H+ antiporter, mainly in mitochodria. Also acts as a low-affinity ethanolamine/H+ antiporter, regulating the supply of extracellular ethanolamine (Etn) for the CDP-Etn pathway, redistribute intracellular Etn and balance the CDP-Cho and CDP-Etn arms of the Kennedy pathway. This is Choline transporter-like protein 2 (slc44a2) from Danio rerio (Zebrafish).